The primary structure comprises 70 residues: Exodeoxyribonuclease 7 small subunit (70 aa).

The protein belongs to the XseB family. In terms of assembly, heterooligomer composed of large and small subunits.

Its subcellular location is the cytoplasm. It catalyses the reaction Exonucleolytic cleavage in either 5'- to 3'- or 3'- to 5'-direction to yield nucleoside 5'-phosphates.. Bidirectionally degrades single-stranded DNA into large acid-insoluble oligonucleotides, which are then degraded further into small acid-soluble oligonucleotides. The chain is Exodeoxyribonuclease 7 small subunit from Streptococcus pneumoniae serotype 2 (strain D39 / NCTC 7466).